A 173-amino-acid chain; its full sequence is RNA polymerase sigma factor TcsR (173 aa).

The tract at residues 122-169 (IKDLTQNEKNILRKIYLHGLRESEISRELNISRQAVNKTHLRALEKLK) is sigma-70 factor domain-4. Positions 143-162 (ESEISRELNISRQAVNKTHL) form a DNA-binding region, H-T-H motif.

The protein belongs to the sigma-70 factor family.

Its function is as follows. Sigma factors are initiation factors that promote the attachment of RNA polymerase to specific initiation sites and are then released. Transcriptional regulator specifically required to activate expression of the toxin gene locus, composed of tcsL and tcdE/utxA. In Paraclostridium sordellii (Clostridium sordellii), this protein is RNA polymerase sigma factor TcsR.